Consider the following 143-residue polypeptide: Small ribosomal subunit protein bS6 (143 aa).

A disordered region spans residues 100 to 143; the sequence is QSFIMKSKDDKGDKPERRRRDDDESGDVGVSNDSDNDGGNAEAA. Residues 105-121 show a composition bias toward basic and acidic residues; it reads KSKDDKGDKPERRRRDD. Residues 126-143 are compositionally biased toward low complexity; sequence DVGVSNDSDNDGGNAEAA.

It belongs to the bacterial ribosomal protein bS6 family.

Its function is as follows. Binds together with bS18 to 16S ribosomal RNA. In Xylella fastidiosa (strain M12), this protein is Small ribosomal subunit protein bS6.